Here is a 259-residue protein sequence, read N- to C-terminus: Thiazole synthase (259 aa).

The active-site Schiff-base intermediate with DXP is Lys99. 1-deoxy-D-xylulose 5-phosphate-binding positions include Gly160, 186 to 187 (AG), and 208 to 209 (NT).

This sequence belongs to the ThiG family. As to quaternary structure, homotetramer. Forms heterodimers with either ThiH or ThiS.

Its subcellular location is the cytoplasm. It catalyses the reaction [ThiS sulfur-carrier protein]-C-terminal-Gly-aminoethanethioate + 2-iminoacetate + 1-deoxy-D-xylulose 5-phosphate = [ThiS sulfur-carrier protein]-C-terminal Gly-Gly + 2-[(2R,5Z)-2-carboxy-4-methylthiazol-5(2H)-ylidene]ethyl phosphate + 2 H2O + H(+). The protein operates within cofactor biosynthesis; thiamine diphosphate biosynthesis. Functionally, catalyzes the rearrangement of 1-deoxy-D-xylulose 5-phosphate (DXP) to produce the thiazole phosphate moiety of thiamine. Sulfur is provided by the thiocarboxylate moiety of the carrier protein ThiS. In vitro, sulfur can be provided by H(2)S. The polypeptide is Thiazole synthase (Porphyromonas gingivalis (strain ATCC BAA-308 / W83)).